Consider the following 144-residue polypeptide: Small polypeptide DEVIL 15 (144 aa).

An N-linked (GlcNAc...) asparagine glycan is attached at asparagine 8. The tract at residues serine 22–aspartate 63 is disordered. The chain crosses the membrane as a helical span at residues isoleucine 104–alanine 120. Residues serine 111–lysine 142 form a required for DVL/RTFL small polypeptide activity region.

The protein belongs to the DVL/RTFL small polypeptides family.

It localises to the cell membrane. Functionally, small polypeptide acting as a regulatory molecule which coordinates cellular responses required for differentiation, growth and development, probably by restricting polar cell proliferation in lateral organs and coordinating socket cell recruitment and differentiation at trichome sites. In Arabidopsis thaliana (Mouse-ear cress), this protein is Small polypeptide DEVIL 15.